The following is a 209-amino-acid chain: Large ribosomal subunit protein uL3 (209 aa).

The protein belongs to the universal ribosomal protein uL3 family. In terms of assembly, part of the 50S ribosomal subunit. Forms a cluster with proteins L14 and L19.

In terms of biological role, one of the primary rRNA binding proteins, it binds directly near the 3'-end of the 23S rRNA, where it nucleates assembly of the 50S subunit. In Lactiplantibacillus plantarum (strain ATCC BAA-793 / NCIMB 8826 / WCFS1) (Lactobacillus plantarum), this protein is Large ribosomal subunit protein uL3.